A 313-amino-acid polypeptide reads, in one-letter code: D-alanine--D-alanine ligase (313 aa).

One can recognise an ATP-grasp domain in the interval 108-308; sequence KLVWQQLGIP…YQELVVGVLA (201 aa). ATP is bound at residue 138–193; sequence VAKLGLPLFVKPASEGSSVAVIKVKSADALPAALIEAVKYDKIVVVEKSVEGGGEY. 3 residues coordinate Mg(2+): Asp-262, Glu-275, and Asn-277.

This sequence belongs to the D-alanine--D-alanine ligase family. Mg(2+) serves as cofactor. It depends on Mn(2+) as a cofactor.

Its subcellular location is the cytoplasm. The enzyme catalyses 2 D-alanine + ATP = D-alanyl-D-alanine + ADP + phosphate + H(+). Its pathway is cell wall biogenesis; peptidoglycan biosynthesis. Its function is as follows. Cell wall formation. The protein is D-alanine--D-alanine ligase of Paraburkholderia phytofirmans (strain DSM 17436 / LMG 22146 / PsJN) (Burkholderia phytofirmans).